The primary structure comprises 444 residues: Maintenance of mitochondrial morphology protein 1 (444 aa).

Residues 1 to 16 (MKGVENTLSQSESVNR) are compositionally biased toward polar residues. The interval 1–20 (MKGVENTLSQSESVNRGYNG) is disordered. The Lumenal portion of the chain corresponds to 1–107 (MKGVENTLSQ…TFSSRSFAEG (107 aa)). A helical transmembrane segment spans residues 108–128 (LVVGQLSVIVVLIFFIKFFIF). At 129 to 444 (SDGPAKTGGG…QEEDPSRAPE (316 aa)) the chain is on the cytoplasmic side. Positions 136-157 (GGGGGSSAESRSSGFTGSPLTS) are disordered. Positions 142–157 (SAESRSSGFTGSPLTS) are enriched in low complexity. Residues 204–418 (SPESLDWFNV…EPRFQFVKLP (215 aa)) form the SMP-LTD domain. The tract at residues 425–444 (KNTREEKSDMQEEDPSRAPE) is disordered. Residues 426–444 (NTREEKSDMQEEDPSRAPE) show a composition bias toward basic and acidic residues.

It belongs to the MMM1 family. In terms of assembly, homodimer. Component of the ER-mitochondria encounter structure (ERMES) or MDM complex, composed of MMM1, MDM10, MDM12 and MDM34. An MMM1 homodimer associates with one molecule of MDM12 on each side in a pairwise head-to-tail manner, and the SMP-LTD domains of MMM1 and MDM12 generate a continuous hydrophobic tunnel for phospholipid trafficking.

The protein resides in the endoplasmic reticulum membrane. In terms of biological role, component of the ERMES/MDM complex, which serves as a molecular tether to connect the endoplasmic reticulum (ER) and mitochondria. Components of this complex are involved in the control of mitochondrial shape and protein biogenesis, and function in nonvesicular lipid trafficking between the ER and mitochondria. The MDM12-MMM1 subcomplex functions in the major beta-barrel assembly pathway that is responsible for biogenesis of all outer membrane beta-barrel proteins, and acts in a late step after the SAM complex. The MDM10-MDM12-MMM1 subcomplex further acts in the TOM40-specific pathway after the action of the MDM12-MMM1 complex. Essential for establishing and maintaining the structure of mitochondria and maintenance of mtDNA nucleoids. The chain is Maintenance of mitochondrial morphology protein 1 from Eremothecium gossypii (strain ATCC 10895 / CBS 109.51 / FGSC 9923 / NRRL Y-1056) (Yeast).